A 739-amino-acid polypeptide reads, in one-letter code: Elongation factor 2 (739 aa).

In terms of domain architecture, tr-type G spans R19–I261. GTP-binding positions include A28–T35, D94–H98, and N148–D151. Residue H603 is modified to Diphthamide.

The protein belongs to the TRAFAC class translation factor GTPase superfamily. Classic translation factor GTPase family. EF-G/EF-2 subfamily.

The protein localises to the cytoplasm. Catalyzes the GTP-dependent ribosomal translocation step during translation elongation. During this step, the ribosome changes from the pre-translocational (PRE) to the post-translocational (POST) state as the newly formed A-site-bound peptidyl-tRNA and P-site-bound deacylated tRNA move to the P and E sites, respectively. Catalyzes the coordinated movement of the two tRNA molecules, the mRNA and conformational changes in the ribosome. This is Elongation factor 2 from Korarchaeum cryptofilum (strain OPF8).